A 448-amino-acid chain; its full sequence is 26S proteasome regulatory subunit 4 homolog (448 aa).

Gly residues predominate over residues 1-16 (MGQGTPGGMGKQGGAP). Disordered stretches follow at residues 1–56 (MGQG…AAAR) and 93–112 (LRPT…DLRG). Composition is skewed to basic and acidic residues over residues 17 to 33 (GDRK…RKFE) and 93 to 111 (LRPT…DDLR). ATP is bound at residue 234-241 (GEPGTGKT).

This sequence belongs to the AAA ATPase family.

It localises to the cytoplasm. Its subcellular location is the nucleus. The 26S proteasome is involved in the ATP-dependent degradation of ubiquitinated proteins. The regulatory (or ATPase) complex confers ATP dependency and substrate specificity to the 26S complex. This is 26S proteasome regulatory subunit 4 homolog (TBP2) from Oryza sativa subsp. japonica (Rice).